The chain runs to 397 residues: Putative efflux system protein YvrP (397 aa).

The helical transmembrane segment at 8–28 (LIGGAICAGVLVLAGIGAGGF) threads the bilayer. Residues 106-183 (EDHSDEVEQA…KELAGLTKNK (78 aa)) are a coiled coil.

It belongs to the membrane fusion protein (MFP) (TC 8.A.1) family.

The protein localises to the cell membrane. The protein is Putative efflux system protein YvrP (yvrP) of Bacillus subtilis (strain 168).